The following is a 1107-amino-acid chain: RNA-dependent RNA polymerase 1 (1107 aa).

Belongs to the RdRP family.

It carries out the reaction RNA(n) + a ribonucleoside 5'-triphosphate = RNA(n+1) + diphosphate. Functionally, RNA-dependent direct polymerase involved in antiviral silencing. Required for the production of some small RNAs (mainly 21 and some 22 nucleotides) derived from the crucifer-infecting tobamovirus (TMV-cg). Required for turnip mosaic virus (TuMV) silencing and accumulation of viral siRNAs. Involved in cucumber mosaic virus (CMV) silencing. Required for the biogenesis of viral secondary siRNAs, process that follows the production of primary siRNAs derived from viral RNA replication. Specifically targets the positive-strand of the 3 RNA genomes of CMV and preferentially amplifies the 5'-terminal siRNAs of each viral genomic RNA. Not involved in the production of siRNAs derived from a single-stranded 336-nucleotide satellite RNA of CMV. The sequence is that of RNA-dependent RNA polymerase 1 (RDR1) from Arabidopsis thaliana (Mouse-ear cress).